The primary structure comprises 160 residues: S-ribosylhomocysteine lyase (160 aa).

Fe cation-binding residues include histidine 57, histidine 61, and cysteine 127.

Belongs to the LuxS family. In terms of assembly, homodimer. It depends on Fe cation as a cofactor.

The enzyme catalyses S-(5-deoxy-D-ribos-5-yl)-L-homocysteine = (S)-4,5-dihydroxypentane-2,3-dione + L-homocysteine. Its function is as follows. Involved in the synthesis of autoinducer 2 (AI-2) which is secreted by bacteria and is used to communicate both the cell density and the metabolic potential of the environment. The regulation of gene expression in response to changes in cell density is called quorum sensing. Catalyzes the transformation of S-ribosylhomocysteine (RHC) to homocysteine (HC) and 4,5-dihydroxy-2,3-pentadione (DPD). The protein is S-ribosylhomocysteine lyase of Streptococcus pyogenes serotype M2 (strain MGAS10270).